A 588-amino-acid chain; its full sequence is MKNNLPIKSRLLYKRLLSYVKPFWPVLLLGVLANILYSGIDAGFTYMTKLFLDKSFITIDLNFVKQIPLIVLIGITLRGLVSSLGSYCMTWVARSVVKVLRQTVFSHIIHLPADYYDEATSGQLLSKILYDVEQVAQVSADALTDFIQNICLVIGLLTVMMVICWQLSLMFLLTIPFVGIIVNYTNKRVRRISHKVQKTMGEVTEIASEAIEGYRVVRIFGGERYEITKFNKATEYSRKNDMKVAISKAINVSGVQLVIAIGIATIIMAAIHLSTVITISAGSFLAIIAAMLQLIKPMKTLTTLNATIQRGLAGAESVFNLLDLPLERNNGLILKEKIRGEIEFKHVYHAYRQGQNILHDVNFVIEAGTSVALVGHSGSGKTTIASLLPRFYELSQGMITLDGMPIQQLSLESLRKQMSLVSQNVTLFNDTLANNIAYGRFDASREQIITAAKLAYADEFIKQLPDGYDTRVGENGVLLSGGQRQRIAIARAILKDAPILILDEATSALDSESEHYIQAALEQVMKGRTTLIIAHRLSTIKHAHKIIVLQHGRIVEQGSHQELLDMDGHYAQLYKVQQFGRINEEVVA.

Helical transmembrane passes span 23 to 43, 56 to 76, 141 to 161, 162 to 182, 257 to 277, and 278 to 298; these read FWPV…IDAG, FITI…IGIT, DALT…TVMM, VICW…GIIV, LVIA…STVI, and TISA…IKPM. The region spanning 28 to 310 is the ABC transmembrane type-1 domain; it reads LLGVLANILY…LTTLNATIQR (283 aa). In terms of domain architecture, ABC transporter spans 342–576; the sequence is IEFKHVYHAY…DGHYAQLYKV (235 aa). 375 to 382 is an ATP binding site; that stretch reads GHSGSGKT.

The protein belongs to the ABC transporter superfamily. Lipid exporter (TC 3.A.1.106) family. In terms of assembly, homodimer.

Its subcellular location is the cell inner membrane. The catalysed reaction is ATP + H2O + lipid A-core oligosaccharideSide 1 = ADP + phosphate + lipid A-core oligosaccharideSide 2.. Its function is as follows. Involved in lipopolysaccharide (LPS) biosynthesis. Translocates lipid A-core from the inner to the outer leaflet of the inner membrane. Transmembrane domains (TMD) form a pore in the inner membrane and the ATP-binding domain (NBD) is responsible for energy generation. The chain is ATP-dependent lipid A-core flippase from Legionella pneumophila subsp. pneumophila (strain Philadelphia 1 / ATCC 33152 / DSM 7513).